Reading from the N-terminus, the 247-residue chain is MKFIIAPAKKMIRAQDDFPVQSQPKYRAQAGELLLLMQQLTFSEAQALWHTSDKLTQTAYNQLQQSDLTRQQSPAIFSYSGIQYQYMAPDLLDDAGLVYIQQHLRILSGLYGILRPFDGVVPYRLEMQNHLRLPHHRNLYDFWGNRLYQALARMPGPIINLASDEYAKAIRPYLQAKDQFIDVRFAHRVNGQLKTRATYAKMARGEMIRFAASHRLTKAADLKNFDSPTYRFDSHLSTATQLVFIAK.

It belongs to the UPF0246 family.

The chain is UPF0246 protein LSEI_2080 from Lacticaseibacillus paracasei (strain ATCC 334 / BCRC 17002 / CCUG 31169 / CIP 107868 / KCTC 3260 / NRRL B-441) (Lactobacillus paracasei).